The following is a 141-amino-acid chain: Large ribosomal subunit protein uL11 (141 aa).

Belongs to the universal ribosomal protein uL11 family. Part of the ribosomal stalk of the 50S ribosomal subunit. Interacts with L10 and the large rRNA to form the base of the stalk. L10 forms an elongated spine to which L12 dimers bind in a sequential fashion forming a multimeric L10(L12)X complex. One or more lysine residues are methylated.

Functionally, forms part of the ribosomal stalk which helps the ribosome interact with GTP-bound translation factors. The polypeptide is Large ribosomal subunit protein uL11 (Streptococcus agalactiae serotype Ia (strain ATCC 27591 / A909 / CDC SS700)).